Consider the following 983-residue polypeptide: Anion exchange protein 4 (983 aa).

Residues 1–48 (MEMKLPGQEGFEASSAPRNIPSGELDSNPDPGTGPSPDGPSDTESKEL) form a disordered region. The N-linked (GlcNAc...) asparagine glycan is linked to N183. 2 disordered regions span residues 186-205 (TGTRPCWGSTHPRKASDNEE) and 332-357 (RIPPPKCLPSQHKRLPSQQREIRGPA). 4 helical membrane-spanning segments follow: residues 415 to 435 (AVLYIYLATVTNAITFGGLLG), 443 to 463 (GVLESFLGTAVAGAAFCLMAG), 500 to 520 (VGIWVATFCLVLVATEASVLV), and 530 to 550 (GFCALISLIFIYDAVGKMLNL). The segment at 415 to 983 (AVLYIYLATV…KAPEINISVN (569 aa)) is membrane (anion exchange). N576 and N600 each carry an N-linked (GlcNAc...) asparagine glycan. The next 7 membrane-spanning stretches (helical) occupy residues 624–644 (VPDIAFFSLLLFLTSFFFAMA), 665–685 (FSSVLAILLGCGLDAFLGLAT), 712–732 (PWWWSVAAALPALLLSILIFM), 758–778 (LFCVAVLMLLTSALGLPWYVS), 815–835 (GLVVFILTGASIFLAPVLKFI), 837–857 (MPVLYGIFLYMGVAALSSIQF), and 899–919 (LWIIKSTPAAIIFPLMLLGLV). Basic and acidic residues predominate over residues 946–957 (RSIPEKGLEPEH). Residues 946–983 (RSIPEKGLEPEHSFSGSDSEDSELMYQPKAPEINISVN) form a disordered region. N979 carries N-linked (GlcNAc...) asparagine glycosylation.

This sequence belongs to the anion exchanger (TC 2.A.31) family. In terms of tissue distribution, kidney specific.

It is found in the basolateral cell membrane. The catalysed reaction is 2 hydrogencarbonate(out) + chloride(in) + Na(+)(out) = 2 hydrogencarbonate(in) + chloride(out) + Na(+)(in). It catalyses the reaction K(+)(in) + 2 hydrogencarbonate(in) + chloride(out) = K(+)(out) + 2 hydrogencarbonate(out) + chloride(in). The enzyme catalyses Li(+)(in) + 2 hydrogencarbonate(in) + chloride(out) = Li(+)(out) + 2 hydrogencarbonate(out) + chloride(in). It carries out the reaction Rb(+)(in) + 2 hydrogencarbonate(in) + chloride(out) = Rb(+)(out) + 2 hydrogencarbonate(out) + chloride(in). The catalysed reaction is Cs(+)(in) + 2 hydrogencarbonate(in) + chloride(out) = Cs(+)(out) + 2 hydrogencarbonate(out) + chloride(in). Functionally, electroneutral Cl(-)/HCO3(-) antiporter that favors chloride ion entry and efflux of hydrogencarbonate and sodium ion across the basolateral membrane and may participate in salivary secretion. Also mediates Cl(-)/HCO3(-) exchange activity in the presence of K(+) as well as Cs(+), Li(+), and Rb(+). Does not contribute to Cl(-)/HCO3(-) exchanger in the apical membrane of the upper villous epithelium. The chain is Anion exchange protein 4 from Homo sapiens (Human).